A 551-amino-acid polypeptide reads, in one-letter code: Hydroxylamine reductase (551 aa).

[2Fe-2S] cluster contacts are provided by Cys-3, Cys-6, Cys-18, and Cys-25. His-249, Glu-273, Cys-317, Cys-405, Cys-433, Cys-459, Glu-493, and Lys-495 together coordinate hybrid [4Fe-2O-2S] cluster. A Cysteine persulfide modification is found at Cys-405.

It belongs to the HCP family. It depends on [2Fe-2S] cluster as a cofactor. Hybrid [4Fe-2O-2S] cluster serves as cofactor.

Its subcellular location is the cytoplasm. The enzyme catalyses A + NH4(+) + H2O = hydroxylamine + AH2 + H(+). Functionally, catalyzes the reduction of hydroxylamine to form NH(3) and H(2)O. The polypeptide is Hydroxylamine reductase (Actinobacillus pleuropneumoniae serotype 5b (strain L20)).